The primary structure comprises 391 residues: uncharacterized protein (391 aa).

Residues 1 to 20 (MRKLFLLSILMIGVIVAFAG) form the signal peptide. C21 carries the S-archaeol cysteine lipid modification. One can recognise a Fe/B12 periplasmic-binding domain in the interval 104-377 (RIVTDFYCPI…DFAKMIHPEL (274 aa)).

It localises to the cell membrane. This is an uncharacterized protein from Methanocaldococcus jannaschii (strain ATCC 43067 / DSM 2661 / JAL-1 / JCM 10045 / NBRC 100440) (Methanococcus jannaschii).